A 264-amino-acid polypeptide reads, in one-letter code: Acyl-[acyl-carrier-protein]--UDP-N-acetylglucosamine O-acyltransferase (264 aa).

Belongs to the transferase hexapeptide repeat family. LpxA subfamily. In terms of assembly, homotrimer.

Its subcellular location is the cytoplasm. The enzyme catalyses a (3R)-hydroxyacyl-[ACP] + UDP-N-acetyl-alpha-D-glucosamine = a UDP-3-O-[(3R)-3-hydroxyacyl]-N-acetyl-alpha-D-glucosamine + holo-[ACP]. It functions in the pathway glycolipid biosynthesis; lipid IV(A) biosynthesis; lipid IV(A) from (3R)-3-hydroxytetradecanoyl-[acyl-carrier-protein] and UDP-N-acetyl-alpha-D-glucosamine: step 1/6. In terms of biological role, involved in the biosynthesis of lipid A, a phosphorylated glycolipid that anchors the lipopolysaccharide to the outer membrane of the cell. The protein is Acyl-[acyl-carrier-protein]--UDP-N-acetylglucosamine O-acyltransferase of Chlorobaculum tepidum (strain ATCC 49652 / DSM 12025 / NBRC 103806 / TLS) (Chlorobium tepidum).